Here is a 205-residue protein sequence, read N- to C-terminus: Beta-crystallin B2 (205 aa).

N-acetylalanine is present on A2. Residues 2 to 16 (ASDHQTQAGKPQSLN) form an N-terminal arm region. 2 consecutive Beta/gamma crystallin 'Greek key' domains span residues 17 to 56 (PKIIIFEQENFQGHSHELNGPCPNLKETGVEKAGSVLVQA) and 57 to 101 (GPWV…RPIK). Residues 102–106 (VDSQE) form a connecting peptide region. Beta/gamma crystallin 'Greek key' domains follow at residues 107-148 (HKII…RVQS) and 149-191 (GTWV…RRIR). The segment at 193 to 205 (MQWHQRGAFHPSN) is C-terminal arm.

It belongs to the beta/gamma-crystallin family. As to quaternary structure, homo/heterodimer, or complexes of higher-order. The structure of beta-crystallin oligomers seems to be stabilized through interactions between the N-terminal arms.

Crystallins are the dominant structural components of the vertebrate eye lens. The polypeptide is Beta-crystallin B2 (CRYBB2) (Homo sapiens (Human)).